Consider the following 436-residue polypeptide: Trigger factor (436 aa).

The PPIase FKBP-type domain maps to 161-246 (GMRVTMDFIG…LIKVEEQILP (86 aa)).

Belongs to the FKBP-type PPIase family. Tig subfamily.

It localises to the cytoplasm. The enzyme catalyses [protein]-peptidylproline (omega=180) = [protein]-peptidylproline (omega=0). Its function is as follows. Involved in protein export. Acts as a chaperone by maintaining the newly synthesized protein in an open conformation. Functions as a peptidyl-prolyl cis-trans isomerase. The sequence is that of Trigger factor from Aeromonas salmonicida (strain A449).